A 460-amino-acid chain; its full sequence is Zinc transporter 6 (460 aa).

Topologically, residues 1–33 (MGTIHLFRKPQRSFFGKLLQEFRLVAADRRSWK) are cytoplasmic. A helical transmembrane segment spans residues 34–54 (ILLFGAINVLCTGFLLMWCSS). The Extracellular portion of the chain corresponds to 55-64 (TNSIALTAYT). The chain crosses the membrane as a helical span at residues 65-85 (YLTIFDLFSLITCLISYWVMM). The Cytoplasmic portion of the chain corresponds to 86–98 (RKPSPVYSFGFER). The chain crosses the membrane as a helical span at residues 99–119 (LEVLAVFASTVLAQLGALFIL). Topologically, residues 120–134 (KESAERFLEQPEIHT) are extracellular. A helical transmembrane segment spans residues 135–155 (GRLLVGTFVALSFNLFTMLSI). Residues 156 to 200 (RNKPFAYVSEAASTSWLQEHVADLSRSLCGLIPGLSSIFLPRMNP) are Cytoplasmic-facing. A helical transmembrane segment spans residues 201–221 (FVLIDLAGAFALCITYMLIEI). The Extracellular segment spans residues 222–223 (NN). The helical transmembrane segment at 224–244 (YFAVDTASAIAIALMTFGTMY) threads the bilayer. Topologically, residues 245–460 (PMSVYSGKVL…GINRMGQPRP (216 aa)) are cytoplasmic. Positions 371–390 (TPVTSTPAKPSSPPPEFSFN) are disordered.

This sequence belongs to the cation diffusion facilitator (CDF) transporter (TC 2.A.4) family. SLC30A subfamily. As to quaternary structure, heterodimer with SLC30A5; form a functional zinc ion transmembrane transporter. As to expression, expressed in brain and liver, and to a lower extent also in lung. Highly expressed in brain (at protein level).

It localises to the golgi apparatus. It is found in the trans-Golgi network membrane. Has probably no intrinsic transporter activity but together with SLC30A5 forms a functional zinc ion:proton antiporter heterodimer, mediating zinc entry into the lumen of organelles along the secretory pathway. As part of that zinc ion:proton antiporter, contributes to zinc ion homeostasis within the early secretory pathway and regulates the activation and folding of enzymes like alkaline phosphatases and enzymes involved in phosphatidylinositol glycan anchor biosynthesis. The polypeptide is Zinc transporter 6 (Slc30a6) (Mus musculus (Mouse)).